Here is a 236-residue protein sequence, read N- to C-terminus: VVGGRVAQPNSWPWQISLQYKSGSSYYHTCGGSLIRQGWVMTAAHCVDSARTWRVVLGEHNLNTNEGKEQIMTVNSVFIHSGWNSDDVAGGYDIALLRLNTQASLNSAVQLAALPPSNQILPNNNPCYITGWGKTSTGGPLSDSLKQAWLPSVDHATCSSSGWWGSTVKTTMVCAGGGANSGCNGDSGGPLNCQVNGSYYVHGVTSFVSSSGCNASKKPTVFTRVSAYISWMNGIM.

Residues 1–236 (VVGGRVAQPN…AYISWMNGIM (236 aa)) form the Peptidase S1 domain. Cysteine 30 and cysteine 46 are joined by a disulfide. The Charge relay system role is filled by histidine 45. Residues glutamate 59, asparagine 61, threonine 64, glutamate 66, and glutamate 69 each contribute to the Ca(2+) site. Aspartate 93 functions as the Charge relay system in the catalytic mechanism. Intrachain disulfides connect cysteine 127/cysteine 193, cysteine 158/cysteine 174, and cysteine 183/cysteine 213. Serine 187 functions as the Charge relay system in the catalytic mechanism.

Belongs to the peptidase S1 family. Elastase subfamily. Requires Ca(2+) as cofactor. As to expression, pancreas.

It is found in the secreted. It catalyses the reaction Hydrolysis of proteins, including elastin. Preferential cleavage: Ala-|-Xaa.. In terms of biological role, acts upon elastin. The polypeptide is Elastase-1 (Salmo salar (Atlantic salmon)).